A 426-amino-acid chain; its full sequence is Proline--tRNA ligase (426 aa).

Belongs to the class-II aminoacyl-tRNA synthetase family. ProS type 2 subfamily. As to quaternary structure, homodimer.

The protein localises to the cytoplasm. It catalyses the reaction tRNA(Pro) + L-proline + ATP = L-prolyl-tRNA(Pro) + AMP + diphosphate. Its function is as follows. Catalyzes the attachment of proline to tRNA(Pro) in a two-step reaction: proline is first activated by ATP to form Pro-AMP and then transferred to the acceptor end of tRNA(Pro). In Anaplasma phagocytophilum (strain HZ), this protein is Proline--tRNA ligase.